Reading from the N-terminus, the 393-residue chain is Na(+)/H(+) antiporter NhaA (393 aa).

12 helical membrane passes run 23 to 43, 58 to 78, 96 to 116, 126 to 146, 155 to 175, 178 to 198, 201 to 221, 224 to 244, 265 to 285, 298 to 318, 334 to 354, and 367 to 387; these read AGGI…NSPF, LSLA…LVGL, MLPG…FAVL, GWAV…SLLG, VFLA…IAIF, AEIS…LFVM, MGVV…FFVF, GVHA…KPAP, VAFI…FKGL, ILLG…WLAI, LYGV…IGLL, and IGVL…LRAA.

The protein belongs to the NhaA Na(+)/H(+) (TC 2.A.33) antiporter family.

It localises to the cell inner membrane. It carries out the reaction Na(+)(in) + 2 H(+)(out) = Na(+)(out) + 2 H(+)(in). Na(+)/H(+) antiporter that extrudes sodium in exchange for external protons. The polypeptide is Na(+)/H(+) antiporter NhaA (Brucella canis (strain ATCC 23365 / NCTC 10854 / RM-666)).